The chain runs to 394 residues: Elongation factor Tu (394 aa).

Residues 10–204 (KEHANIGTIG…AVDDYIPTPE (195 aa)) form the tr-type G domain. The tract at residues 19–26 (GHVDHGKT) is G1. 19 to 26 (GHVDHGKT) is a GTP binding site. Mg(2+) is bound at residue T26. Positions 60–64 (GITIN) are G2. A G3 region spans residues 81-84 (DCPG). GTP is bound by residues 81-85 (DCPGH) and 136-139 (NKVD). A G4 region spans residues 136–139 (NKVD). A G5 region spans residues 174-176 (SAL).

It belongs to the TRAFAC class translation factor GTPase superfamily. Classic translation factor GTPase family. EF-Tu/EF-1A subfamily. As to quaternary structure, monomer.

The protein resides in the cytoplasm. It carries out the reaction GTP + H2O = GDP + phosphate + H(+). In terms of biological role, GTP hydrolase that promotes the GTP-dependent binding of aminoacyl-tRNA to the A-site of ribosomes during protein biosynthesis. In Staphylococcus epidermidis (strain ATCC 35984 / DSM 28319 / BCRC 17069 / CCUG 31568 / BM 3577 / RP62A), this protein is Elongation factor Tu.